Here is a 186-residue protein sequence, read N- to C-terminus: Large ribosomal subunit protein uL5 (186 aa).

Belongs to the universal ribosomal protein uL5 family. Part of the 50S ribosomal subunit; part of the 5S rRNA/L5/L18/L25 subcomplex. Contacts the 5S rRNA and the P site tRNA. Forms a bridge to the 30S subunit in the 70S ribosome.

Its function is as follows. This is one of the proteins that bind and probably mediate the attachment of the 5S RNA into the large ribosomal subunit, where it forms part of the central protuberance. In the 70S ribosome it contacts protein S13 of the 30S subunit (bridge B1b), connecting the 2 subunits; this bridge is implicated in subunit movement. Contacts the P site tRNA; the 5S rRNA and some of its associated proteins might help stabilize positioning of ribosome-bound tRNAs. The sequence is that of Large ribosomal subunit protein uL5 from Jannaschia sp. (strain CCS1).